A 239-amino-acid polypeptide reads, in one-letter code: Large ribosomal subunit protein uL2 (239 aa).

Disordered stretches follow at residues 1–20 (MGKS…FRSP) and 203–239 (PFGG…GRRK). Positions 222–239 (PPGRKVGHIAARRTGRRK) are enriched in basic residues.

This sequence belongs to the universal ribosomal protein uL2 family. As to quaternary structure, part of the 50S ribosomal subunit. Forms a bridge to the 30S subunit in the 70S ribosome.

Its function is as follows. One of the primary rRNA binding proteins. Required for association of the 30S and 50S subunits to form the 70S ribosome, for tRNA binding and peptide bond formation. It has been suggested to have peptidyltransferase activity; this is somewhat controversial. Makes several contacts with the 16S rRNA in the 70S ribosome. This Pyrococcus horikoshii (strain ATCC 700860 / DSM 12428 / JCM 9974 / NBRC 100139 / OT-3) protein is Large ribosomal subunit protein uL2.